The following is a 360-amino-acid chain: Glycerol-3-phosphate dehydrogenase [NAD(+)], cytoplasmic (360 aa).

Residues 11–16 (GSGNWG), Phe-98, Lys-121, and Ala-155 each bind NAD(+). Lys-121 contributes to the substrate binding site. Residue Lys-206 is the Proton acceptor of the active site. Residues Arg-270 and Gln-299 each coordinate NAD(+). 270–271 (RN) contacts substrate.

This sequence belongs to the NAD-dependent glycerol-3-phosphate dehydrogenase family. Homodimer.

It localises to the cytoplasm. The enzyme catalyses sn-glycerol 3-phosphate + NAD(+) = dihydroxyacetone phosphate + NADH + H(+). It participates in phospholipid metabolism; alpha-glycerophosphate cycle. The chain is Glycerol-3-phosphate dehydrogenase [NAD(+)], cytoplasmic (Gpdh1) from Drosophila kanekoi (Fruit fly).